Consider the following 177-residue polypeptide: Large ribosomal subunit protein uL5m (177 aa).

This sequence belongs to the universal ribosomal protein uL5 family.

Its subcellular location is the mitochondrion. This Acanthamoeba castellanii (Amoeba) protein is Large ribosomal subunit protein uL5m (RPL5).